Here is a 446-residue protein sequence, read N- to C-terminus: C4-dicarboxylate transport protein (446 aa).

9 consecutive transmembrane segments (helical) span residues 20–40 (HLYVQVLAAIAIGILLGHFYP), 56–76 (LVKMVIAPVIFLTVVTGIAGM), 91–111 (IYFLTFSTLALIIGLIIANVV), 160–180 (GDILQVLFFSVLFGIALAGVG), 200–220 (LVHILMKAAPIGAFGAMAFTI), 233–253 (FLILTFYITSFLFVVVVLGLV), 319–339 (IYMTLAALFIAQATDIHLSLG), 344–364 (LLLVAMLSSKGAAGITGAGFI), and 367–387 (AATLSVVPTVPLAGMALILGI).

This sequence belongs to the dicarboxylate/amino acid:cation symporter (DAACS) (TC 2.A.23) family.

It is found in the cell inner membrane. Functionally, responsible for the transport of dicarboxylates such as succinate, fumarate, and malate from the periplasm across the membrane. This Azorhizobium caulinodans (strain ATCC 43989 / DSM 5975 / JCM 20966 / LMG 6465 / NBRC 14845 / NCIMB 13405 / ORS 571) protein is C4-dicarboxylate transport protein.